We begin with the raw amino-acid sequence, 915 residues long: Protein translocase subunit SecA (915 aa).

ATP contacts are provided by residues Gln-87, 105-109 (GEGKT), and Asp-512. Residues 881–915 (LPGTAPVRPEPKIGRNEPCPCGSGKKYKHCHGQLN) form a disordered region. Zn(2+) is bound by residues Cys-899, Cys-901, Cys-910, and His-911. Positions 905-915 (KKYKHCHGQLN) are enriched in basic residues.

This sequence belongs to the SecA family. As to quaternary structure, monomer and homodimer. Part of the essential Sec protein translocation apparatus which comprises SecA, SecYEG and auxiliary proteins SecDF-YajC and YidC. It depends on Zn(2+) as a cofactor.

The protein resides in the cell inner membrane. Its subcellular location is the cytoplasm. The enzyme catalyses ATP + H2O + cellular proteinSide 1 = ADP + phosphate + cellular proteinSide 2.. In terms of biological role, part of the Sec protein translocase complex. Interacts with the SecYEG preprotein conducting channel. Has a central role in coupling the hydrolysis of ATP to the transfer of proteins into and across the cell membrane, serving both as a receptor for the preprotein-SecB complex and as an ATP-driven molecular motor driving the stepwise translocation of polypeptide chains across the membrane. The polypeptide is Protein translocase subunit SecA (Azotobacter vinelandii (strain DJ / ATCC BAA-1303)).